Here is a 625-residue protein sequence, read N- to C-terminus: tRNA uridine 5-carboxymethylaminomethyl modification enzyme MnmG (625 aa).

FAD-binding positions include 11-16, V123, and S178; that span reads GAGHAG. 271–285 serves as a coordination point for NAD(+); it reads GPRYCPSIETKIVTF. Q368 provides a ligand contact to FAD.

The protein belongs to the MnmG family. As to quaternary structure, homodimer. Heterotetramer of two MnmE and two MnmG subunits. The cofactor is FAD.

The protein resides in the cytoplasm. Functionally, NAD-binding protein involved in the addition of a carboxymethylaminomethyl (cmnm) group at the wobble position (U34) of certain tRNAs, forming tRNA-cmnm(5)s(2)U34. The chain is tRNA uridine 5-carboxymethylaminomethyl modification enzyme MnmG from Bacteroides fragilis (strain YCH46).